We begin with the raw amino-acid sequence, 262 residues long: Acyl-[acyl-carrier-protein]--UDP-N-acetylglucosamine O-acyltransferase (262 aa).

This sequence belongs to the transferase hexapeptide repeat family. LpxA subfamily. In terms of assembly, homotrimer.

Its subcellular location is the cytoplasm. It catalyses the reaction a (3R)-hydroxyacyl-[ACP] + UDP-N-acetyl-alpha-D-glucosamine = a UDP-3-O-[(3R)-3-hydroxyacyl]-N-acetyl-alpha-D-glucosamine + holo-[ACP]. Its pathway is glycolipid biosynthesis; lipid IV(A) biosynthesis; lipid IV(A) from (3R)-3-hydroxytetradecanoyl-[acyl-carrier-protein] and UDP-N-acetyl-alpha-D-glucosamine: step 1/6. Functionally, involved in the biosynthesis of lipid A, a phosphorylated glycolipid that anchors the lipopolysaccharide to the outer membrane of the cell. The chain is Acyl-[acyl-carrier-protein]--UDP-N-acetylglucosamine O-acyltransferase from Histophilus somni (strain 129Pt) (Haemophilus somnus).